A 229-amino-acid polypeptide reads, in one-letter code: tRNA pseudouridine synthase B (229 aa).

The active-site Nucleophile is the aspartate 42.

Belongs to the pseudouridine synthase TruB family. Type 1 subfamily.

It catalyses the reaction uridine(55) in tRNA = pseudouridine(55) in tRNA. Its function is as follows. Responsible for synthesis of pseudouridine from uracil-55 in the psi GC loop of transfer RNAs. The sequence is that of tRNA pseudouridine synthase B from Ureaplasma urealyticum serovar 10 (strain ATCC 33699 / Western).